We begin with the raw amino-acid sequence, 652 residues long: Acetyl-coenzyme A synthetase (652 aa).

CoA-binding positions include 193 to 196 and Thr-312; that span reads RRGK. Residues 388 to 390, 412 to 417, Asp-501, and Arg-516 each bind ATP; these read GEP and DTWWQT. A CoA-binding site is contributed by Ser-524. Positions 538, 540, and 543 each coordinate Mg(2+). Lys-611 is subject to N6-acetyllysine.

The protein belongs to the ATP-dependent AMP-binding enzyme family. Mg(2+) is required as a cofactor. In terms of processing, acetylated. Deacetylation by the SIR2-homolog deacetylase activates the enzyme.

It carries out the reaction acetate + ATP + CoA = acetyl-CoA + AMP + diphosphate. In terms of biological role, catalyzes the conversion of acetate into acetyl-CoA (AcCoA), an essential intermediate at the junction of anabolic and catabolic pathways. AcsA undergoes a two-step reaction. In the first half reaction, AcsA combines acetate with ATP to form acetyl-adenylate (AcAMP) intermediate. In the second half reaction, it can then transfer the acetyl group from AcAMP to the sulfhydryl group of CoA, forming the product AcCoA. The chain is Acetyl-coenzyme A synthetase from Streptomyces avermitilis (strain ATCC 31267 / DSM 46492 / JCM 5070 / NBRC 14893 / NCIMB 12804 / NRRL 8165 / MA-4680).